The chain runs to 843 residues: Elongation factor 2 (843 aa).

Residues 17–344 (HNIRNMSVIA…MMIFHLPSPH (328 aa)) enclose the tr-type G domain. GTP contacts are provided by residues 26 to 33 (AHVDHGKS) and 158 to 161 (NKMD). A Diphthamide modification is found at His-700. Phosphoserine is present on Ser-837.

The protein belongs to the TRAFAC class translation factor GTPase superfamily. Classic translation factor GTPase family. In terms of assembly, may interact with glutaredoxins (Grxs). As to expression, expressed in root, stem, leaves, flowers and siliques.

The protein resides in the cytoplasm. It carries out the reaction GTP + H2O = GDP + phosphate + H(+). Its pathway is protein biosynthesis; polypeptide chain elongation. Its function is as follows. Catalyzes the GTP-dependent ribosomal translocation step during translation elongation. During this step, the ribosome changes from the pre-translocational (PRE) to the post-translocational (POST) state as the newly formed A-site-bound peptidyl-tRNA and P-site-bound deacylated tRNA move to the P and E sites, respectively. Catalyzes the coordinated movement of the two tRNA molecules, the mRNA and conformational changes in the ribosome. Involved in cold responses leading to freezing tolerance via the induction of cold-responsive genes. This is Elongation factor 2 from Arabidopsis thaliana (Mouse-ear cress).